We begin with the raw amino-acid sequence, 180 residues long: Beta-lactoglobulin (180 aa).

The first 18 residues, 1-18 (MKCLLLALGLALACAAQA), serve as a signal peptide directing secretion. 3 disulfide bridges follow: cysteine 84-cysteine 178, cysteine 124-cysteine 137, and cysteine 124-cysteine 139.

This sequence belongs to the calycin superfamily. Lipocalin family. Under physiological conditions beta-lactoglobulin exists as an equilibrium mixture of monomeric and dimeric forms. Interaction with LMBR1L is controversial. In terms of processing, alternate disulfide bonds occur in equal amounts. In terms of tissue distribution, synthesized in mammary gland and secreted in milk.

It is found in the secreted. In terms of biological role, primary component of whey, it binds retinol and is probably involved in the transport of that molecule. This Bubalus bubalis (Domestic water buffalo) protein is Beta-lactoglobulin (LGB).